A 581-amino-acid polypeptide reads, in one-letter code: ATP-dependent lipid A-core flippase (581 aa).

5 helical membrane-spanning segments follow: residues 15 to 35 (LWPI…ALII), 62 to 82 (ISIW…SSGF), 152 to 172 (IIGL…VLII), 252 to 272 (IIIQ…SSLP), and 274 to 294 (IIDE…IALM). Positions 27-309 (IISIVALIIN…LTNVNANFQK (283 aa)) constitute an ABC transmembrane type-1 domain. Positions 341-577 (IKFKNITFTY…KGVYAQIYRL (237 aa)) constitute an ABC transporter domain. Residue 375–382 (GSSGAGKS) participates in ATP binding.

This sequence belongs to the ABC transporter superfamily. Lipid exporter (TC 3.A.1.106) family. Homodimer.

The protein localises to the cell membrane. The catalysed reaction is ATP + H2O + lipid A-core oligosaccharideSide 1 = ADP + phosphate + lipid A-core oligosaccharideSide 2.. Its function is as follows. Involved in lipopolysaccharide (LPS) biosynthesis. Translocates lipid A-core from the inner to the outer leaflet of the inner membrane. Transmembrane domains (TMD) form a pore in the inner membrane and the ATP-binding domain (NBD) is responsible for energy generation. This is ATP-dependent lipid A-core flippase from Wigglesworthia glossinidia brevipalpis.